A 196-amino-acid polypeptide reads, in one-letter code: UMP-CMP kinase (196 aa).

Residue 13-18 coordinates ATP; that stretch reads GAGKGT. Position 33 is a phosphoserine (Ser33). The NMP stretch occupies residues 33–63; sequence SAGELLRDERKNPDSQYGELIEKYIKEGKIV. Residue Arg39 coordinates a ribonucleoside 5'-phosphate. 2 positions are modified to N6-acetyllysine: Lys43 and Lys55. Residue 61–63 coordinates a ribonucleoside 5'-phosphate; that stretch reads KIV. Lys73 is covalently cross-linked (Glycyl lysine isopeptide (Lys-Gly) (interchain with G-Cter in SUMO2)). 93 to 96 provides a ligand contact to a ribonucleoside 5'-phosphate; sequence GFPR. Residue Asn100 coordinates CMP. Position 106 is an N6-succinyllysine (Lys106). The tract at residues 133-143 is LID; sequence ERGKSSGRSDD. ATP is bound at residue Arg134. A ribonucleoside 5'-phosphate-binding residues include Arg140 and Arg151. Lys179 contacts ATP. Ser180 bears the Phosphoserine mark.

The protein belongs to the adenylate kinase family. UMP-CMP kinase subfamily. Monomer. It depends on Mg(2+) as a cofactor.

It is found in the nucleus. It localises to the cytoplasm. The enzyme catalyses CMP + ATP = CDP + ADP. The catalysed reaction is dCMP + ATP = dCDP + ADP. It carries out the reaction UMP + ATP = UDP + ADP. It catalyses the reaction a 2'-deoxyribonucleoside 5'-diphosphate + ATP = a 2'-deoxyribonucleoside 5'-triphosphate + ADP. The enzyme catalyses a ribonucleoside 5'-diphosphate + ATP = a ribonucleoside 5'-triphosphate + ADP. In terms of biological role, catalyzes the phosphorylation of pyrimidine nucleoside monophosphates at the expense of ATP. Plays an important role in de novo pyrimidine nucleotide biosynthesis. Has preference for UMP and CMP as phosphate acceptors. Also displays broad nucleoside diphosphate kinase activity. This chain is UMP-CMP kinase (Cmpk1), found in Rattus norvegicus (Rat).